A 485-amino-acid polypeptide reads, in one-letter code: Proline--tRNA ligase (485 aa).

It belongs to the class-II aminoacyl-tRNA synthetase family. ProS type 3 subfamily. Homodimer.

Its subcellular location is the cytoplasm. The catalysed reaction is tRNA(Pro) + L-proline + ATP = L-prolyl-tRNA(Pro) + AMP + diphosphate. In terms of biological role, catalyzes the attachment of proline to tRNA(Pro) in a two-step reaction: proline is first activated by ATP to form Pro-AMP and then transferred to the acceptor end of tRNA(Pro). The sequence is that of Proline--tRNA ligase from Methanopyrus kandleri (strain AV19 / DSM 6324 / JCM 9639 / NBRC 100938).